The primary structure comprises 207 residues: Ribosomal RNA small subunit methyltransferase G (207 aa).

S-adenosyl-L-methionine contacts are provided by residues G76, Q81, 127 to 128 (VE), and R141.

The protein belongs to the methyltransferase superfamily. RNA methyltransferase RsmG family.

It is found in the cytoplasm. It catalyses the reaction guanosine(527) in 16S rRNA + S-adenosyl-L-methionine = N(7)-methylguanosine(527) in 16S rRNA + S-adenosyl-L-homocysteine. In terms of biological role, specifically methylates the N7 position of guanine in position 527 of 16S rRNA. This is Ribosomal RNA small subunit methyltransferase G from Neisseria meningitidis serogroup B (strain ATCC BAA-335 / MC58).